A 369-amino-acid polypeptide reads, in one-letter code: Molybdenum import ATP-binding protein ModC 1 (369 aa).

The ABC transporter domain maps to 10-240 (KGYIEVAFNG…PALASRSEAA (231 aa)). 42 to 49 (GPPGCGKT) provides a ligand contact to ATP. Residues 297–367 (ASSILNVFRA…ELCGKLGDDG (71 aa)) form the Mop domain.

Belongs to the ABC transporter superfamily. Molybdate importer (TC 3.A.1.8) family. As to quaternary structure, the complex is composed of two ATP-binding proteins (ModC), two transmembrane proteins (ModB) and a solute-binding protein (ModA).

Its subcellular location is the cell inner membrane. The enzyme catalyses molybdate(out) + ATP + H2O = molybdate(in) + ADP + phosphate + H(+). Part of the ABC transporter complex ModABC involved in molybdenum import. Responsible for energy coupling to the transport system. In Bradyrhizobium diazoefficiens (strain JCM 10833 / BCRC 13528 / IAM 13628 / NBRC 14792 / USDA 110), this protein is Molybdenum import ATP-binding protein ModC 1.